Consider the following 75-residue polypeptide: UPF0291 protein lin1342 (75 aa).

Residues 55–75 (IDPKGNDVTPHKIKQMRKNKK) are disordered. Residues 65-75 (HKIKQMRKNKK) are compositionally biased toward basic residues.

Belongs to the UPF0291 family.

Its subcellular location is the cytoplasm. This is UPF0291 protein lin1342 from Listeria innocua serovar 6a (strain ATCC BAA-680 / CLIP 11262).